A 179-amino-acid chain; its full sequence is Ribosome maturation factor RimM (179 aa).

The PRC barrel domain occupies 102–179 (DGEYYWYQLE…EMKVDWDADF (78 aa)).

Belongs to the RimM family. Binds ribosomal protein uS19.

The protein resides in the cytoplasm. In terms of biological role, an accessory protein needed during the final step in the assembly of 30S ribosomal subunit, possibly for assembly of the head region. Essential for efficient processing of 16S rRNA. May be needed both before and after RbfA during the maturation of 16S rRNA. It has affinity for free ribosomal 30S subunits but not for 70S ribosomes. This is Ribosome maturation factor RimM from Pseudomonas savastanoi pv. phaseolicola (strain 1448A / Race 6) (Pseudomonas syringae pv. phaseolicola (strain 1448A / Race 6)).